A 1076-amino-acid polypeptide reads, in one-letter code: Carbamoyl phosphate synthase large chain (1076 aa).

A carboxyphosphate synthetic domain region spans residues 1-402 (MPKREDIRKI…ALQKAIRSLE (402 aa)). Residues Arg-129, Arg-169, Gly-175, Gly-176, Glu-208, Val-210, Glu-215, Gly-241, Val-242, His-243, Gln-285, and Glu-299 each contribute to the ATP site. The ATP-grasp 1 domain maps to 133-328 (KEAMRKIGLD…IAKIAAKLAV (196 aa)). Mg(2+) contacts are provided by Gln-285, Glu-299, and Asn-301. Residues Gln-285, Glu-299, and Asn-301 each contribute to the Mn(2+) site. An oligomerization domain region spans residues 403–555 (IGRYGLGCDG…YSTYEDENEA (153 aa)). Positions 556 to 939 (LRSERKKVMI…YKAELAAGMK (384 aa)) are carbamoyl phosphate synthetic domain. Residues 680–871 (AELLERLNIP…LAKIAAKLMM (192 aa)) enclose the ATP-grasp 2 domain. Residues Arg-716, Lys-755, Leu-757, Glu-762, Gly-787, Val-788, His-789, Ser-790, Gln-830, and Glu-842 each coordinate ATP. Mg(2+) contacts are provided by Gln-830, Glu-842, and Asn-844. 3 residues coordinate Mn(2+): Gln-830, Glu-842, and Asn-844. The MGS-like domain maps to 938–1076 (MKLPLKGTVF…KSIQEYHEES (139 aa)). The interval 940–1076 (LPLKGTVFIS…KSIQEYHEES (137 aa)) is allosteric domain.

This sequence belongs to the CarB family. In terms of assembly, composed of two chains; the small (or glutamine) chain promotes the hydrolysis of glutamine to ammonia, which is used by the large (or ammonia) chain to synthesize carbamoyl phosphate. Tetramer of heterodimers (alpha,beta)4. Mg(2+) is required as a cofactor. The cofactor is Mn(2+).

The catalysed reaction is hydrogencarbonate + L-glutamine + 2 ATP + H2O = carbamoyl phosphate + L-glutamate + 2 ADP + phosphate + 2 H(+). It carries out the reaction hydrogencarbonate + NH4(+) + 2 ATP = carbamoyl phosphate + 2 ADP + phosphate + 2 H(+). The protein operates within amino-acid biosynthesis; L-arginine biosynthesis; carbamoyl phosphate from bicarbonate: step 1/1. Its pathway is pyrimidine metabolism; UMP biosynthesis via de novo pathway; (S)-dihydroorotate from bicarbonate: step 1/3. In terms of biological role, large subunit of the glutamine-dependent carbamoyl phosphate synthetase (CPSase). CPSase catalyzes the formation of carbamoyl phosphate from the ammonia moiety of glutamine, carbonate, and phosphate donated by ATP, constituting the first step of 2 biosynthetic pathways, one leading to arginine and/or urea and the other to pyrimidine nucleotides. The large subunit (synthetase) binds the substrates ammonia (free or transferred from glutamine from the small subunit), hydrogencarbonate and ATP and carries out an ATP-coupled ligase reaction, activating hydrogencarbonate by forming carboxy phosphate which reacts with ammonia to form carbamoyl phosphate. In Archaeoglobus fulgidus (strain ATCC 49558 / DSM 4304 / JCM 9628 / NBRC 100126 / VC-16), this protein is Carbamoyl phosphate synthase large chain.